The chain runs to 90 residues: Small ribosomal subunit protein uS15 (90 aa).

Belongs to the universal ribosomal protein uS15 family. Part of the 30S ribosomal subunit. Forms a bridge to the 50S subunit in the 70S ribosome, contacting the 23S rRNA.

In terms of biological role, one of the primary rRNA binding proteins, it binds directly to 16S rRNA where it helps nucleate assembly of the platform of the 30S subunit by binding and bridging several RNA helices of the 16S rRNA. Forms an intersubunit bridge (bridge B4) with the 23S rRNA of the 50S subunit in the ribosome. In Campylobacter curvus (strain 525.92), this protein is Small ribosomal subunit protein uS15.